A 343-amino-acid polypeptide reads, in one-letter code: MIKLSNITKVFQQGARTIQALNNVSLHVPAGQIYGVIGASGAGKSTLIRCVNLLERPTEGSVMVGGQELTTLSESELTKARRQIGMIFQHFNLLSSRTVFGNVALPLELDNTPKEEIKRRVTELLDLVGLGDKHDSYPANLSGGQKQRVAIARALASNPKVLLCDEATSALDPATTRSILELLKDINRRLGLTILLITHEMDVVKRICDCVAVISNGELIEQDTVSEVFSHPKTPLAQKFIQSTLHLDIPEDYQARLKASPETDSVPMLRMEFTGQSVDAPLLSETARRFNVNNNIISAQMDYAGGVKFGIMLTEMHGTQEETQAAIAWLQDHHVKVEVLGYV.

Positions 2–241 (IKLSNITKVF…PKTPLAQKFI (240 aa)) constitute an ABC transporter domain. Position 38 to 45 (38 to 45 (GASGAGKS)) interacts with ATP.

The protein belongs to the ABC transporter superfamily. Methionine importer (TC 3.A.1.24) family. As to quaternary structure, the complex is composed of two ATP-binding proteins (MetN), two transmembrane proteins (MetI) and a solute-binding protein (MetQ).

It is found in the cell inner membrane. The catalysed reaction is L-methionine(out) + ATP + H2O = L-methionine(in) + ADP + phosphate + H(+). It catalyses the reaction D-methionine(out) + ATP + H2O = D-methionine(in) + ADP + phosphate + H(+). Its function is as follows. Part of the ABC transporter complex MetNIQ involved in methionine import. Responsible for energy coupling to the transport system. This Salmonella paratyphi A (strain ATCC 9150 / SARB42) protein is Methionine import ATP-binding protein MetN 1.